The chain runs to 280 residues: MGWHDGCIRCMVGVPFASVIATVLCFAGVALFCGCGHEALSGTEKLIETYFSKNYQEYEYLIHVINAFQYVIYGIAIFFFLYGILLLAEGFYTTTAIKHILGEFKPPAMKGGLISTVTGGPPKGRSTRGRQPVHTIELICRCLGKWLGHPDKFVGVTYVITILWILIFACSAVPVYIYFNTWVTCQSIAFPGKTTTSVSTLCLDARMYGVLPWNAFPGKVCGTSLLAICKTSEFQMTFHLFIAAFVGAAATLVALLTYMVGASFNYAVLRVTGRSDRSKF.

The Cytoplasmic segment spans residues 1 to 10 (MGWHDGCIRC). Residues C7 and C10 are each lipidated (S-palmitoyl cysteine). The helical transmembrane segment at 11–36 (MVGVPFASVIATVLCFAGVALFCGCG) threads the bilayer. Topologically, residues 37–59 (HEALSGTEKLIETYFSKNYQEYE) are extracellular. The helical transmembrane segment at 60-88 (YLIHVINAFQYVIYGIAIFFFLYGILLLA) threads the bilayer. The Cytoplasmic portion of the chain corresponds to 89–152 (EGFYTTTAIK…LGKWLGHPDK (64 aa)). Residues C140 and C142 are each lipidated (S-palmitoyl cysteine). Residues 153 to 179 (FVGVTYVITILWILIFACSAVPVYIYF) form a helical membrane-spanning segment. At 180-239 (NTWVTCQSIAFPGKTTTSVSTLCLDARMYGVLPWNAFPGKVCGTSLLAICKTSEFQMTFH) the chain is on the extracellular side. 2 disulfide bridges follow: C185-C229 and C202-C221. The chain crosses the membrane as a helical span at residues 240-269 (LFIAAFVGAAATLVALLTYMVGASFNYAVL). Residues 270–280 (RVTGRSDRSKF) lie on the Cytoplasmic side of the membrane.

This sequence belongs to the myelin proteolipid protein family.

It localises to the cell membrane. Its function is as follows. This is the major myelin protein from the central nervous system. It plays an important role in the formation or maintenance of the multilamellar structure of myelin. This chain is Myelin proteolipid protein B (plp1-b), found in Xenopus laevis (African clawed frog).